Reading from the N-terminus, the 458-residue chain is Bifunctional protein GlmU (458 aa).

Residues 1 to 229 (MKEKALSIVI…FMEVEGVNNR (229 aa)) form a pyrophosphorylase region. UDP-N-acetyl-alpha-D-glucosamine-binding positions include 11-14 (LAAG), Lys-25, Gln-76, 81-82 (GT), 103-105 (YGD), Gly-140, Glu-154, Asn-169, and Asn-227. Asp-105 contributes to the Mg(2+) binding site. Asn-227 contacts Mg(2+). The segment at 230-250 (QQLARLERYYQRKQADNLLLA) is linker. Residues 251–458 (GVALADPERF…WQRPTKQTKK (208 aa)) are N-acetyltransferase. Residues Arg-333 and Lys-351 each contribute to the UDP-N-acetyl-alpha-D-glucosamine site. The active-site Proton acceptor is His-363. The UDP-N-acetyl-alpha-D-glucosamine site is built by Tyr-366 and Asn-377. Acetyl-CoA is bound by residues Ala-380, 386 to 387 (NY), Ser-405, Ala-423, and Arg-440.

The protein in the N-terminal section; belongs to the N-acetylglucosamine-1-phosphate uridyltransferase family. This sequence in the C-terminal section; belongs to the transferase hexapeptide repeat family. Homotrimer. Requires Mg(2+) as cofactor.

Its subcellular location is the cytoplasm. It catalyses the reaction alpha-D-glucosamine 1-phosphate + acetyl-CoA = N-acetyl-alpha-D-glucosamine 1-phosphate + CoA + H(+). The catalysed reaction is N-acetyl-alpha-D-glucosamine 1-phosphate + UTP + H(+) = UDP-N-acetyl-alpha-D-glucosamine + diphosphate. Its pathway is nucleotide-sugar biosynthesis; UDP-N-acetyl-alpha-D-glucosamine biosynthesis; N-acetyl-alpha-D-glucosamine 1-phosphate from alpha-D-glucosamine 6-phosphate (route II): step 2/2. It functions in the pathway nucleotide-sugar biosynthesis; UDP-N-acetyl-alpha-D-glucosamine biosynthesis; UDP-N-acetyl-alpha-D-glucosamine from N-acetyl-alpha-D-glucosamine 1-phosphate: step 1/1. It participates in bacterial outer membrane biogenesis; LPS lipid A biosynthesis. Catalyzes the last two sequential reactions in the de novo biosynthetic pathway for UDP-N-acetylglucosamine (UDP-GlcNAc). The C-terminal domain catalyzes the transfer of acetyl group from acetyl coenzyme A to glucosamine-1-phosphate (GlcN-1-P) to produce N-acetylglucosamine-1-phosphate (GlcNAc-1-P), which is converted into UDP-GlcNAc by the transfer of uridine 5-monophosphate (from uridine 5-triphosphate), a reaction catalyzed by the N-terminal domain. The protein is Bifunctional protein GlmU of Pasteurella multocida (strain Pm70).